Consider the following 176-residue polypeptide: ADP-ribosylation factor-like protein 8d (176 aa).

GTP-binding positions include 21 to 26 (NSGKTS), 40 to 43 (MIPT), 62 to 66 (DLGGQ), and 121 to 124 (NKID).

Belongs to the small GTPase superfamily. Arf family. As to quaternary structure, interacts with tubulin.

It is found in the late endosome membrane. It localises to the lysosome membrane. Its subcellular location is the cytoplasm. The protein localises to the cytoskeleton. The protein resides in the spindle. In terms of biological role, may play a role in lysosome motility. May play a role in chromosome segregation. This chain is ADP-ribosylation factor-like protein 8d, found in Arabidopsis thaliana (Mouse-ear cress).